Consider the following 257-residue polypeptide: Zinc transporter ZupT (257 aa).

Helical transmembrane passes span 5-25 (LILTILAGAATFIGAFLGVLG), 32-52 (LLAFSLGFAAGIMLLISLMEM), and 61-81 (GMSPVLGYGMFIFGLLGYFGL). Fe(2+) contacts are provided by Asn120 and Glu123. Residues Glu123 and His148 each contribute to the Zn(2+) site. 4 consecutive transmembrane segments (helical) span residues 137 to 157 (LGFGIALAVALHNIPEGLAVA), 171 to 191 (ILWAGISGLAEILGGVLAWLI), 195 to 215 (MISPVVMAAIMAAVAGIMVAL), and 236 to 256 (GVLCGMSVMGFSLVLLQTAGI). Asn149, Glu152, and Glu181 together coordinate Fe(2+). Glu152 serves as a coordination point for Zn(2+).

Belongs to the ZIP transporter (TC 2.A.5) family. ZupT subfamily.

The protein localises to the cell inner membrane. It carries out the reaction Zn(2+)(in) = Zn(2+)(out). Mediates zinc uptake. May also transport other divalent cations. The protein is Zinc transporter ZupT of Escherichia coli O127:H6 (strain E2348/69 / EPEC).